The primary structure comprises 247 residues: 6-carboxyhexanoate--CoA ligase (247 aa).

This sequence belongs to the BioW family. As to quaternary structure, homodimer. Requires Mg(2+) as cofactor.

The catalysed reaction is heptanedioate + ATP + CoA = 6-carboxyhexanoyl-CoA + AMP + diphosphate. Its pathway is metabolic intermediate metabolism; pimeloyl-CoA biosynthesis; pimeloyl-CoA from pimelate: step 1/1. Its function is as follows. Catalyzes the transformation of pimelate into pimeloyl-CoA with concomitant hydrolysis of ATP to AMP. The sequence is that of 6-carboxyhexanoate--CoA ligase from Persephonella marina (strain DSM 14350 / EX-H1).